The primary structure comprises 143 residues: Transcriptional regulator MraZ (143 aa).

SpoVT-AbrB domains follow at residues 5-47 (EYKH…PMHE) and 76-119 (ATEC…SSKR).

Belongs to the MraZ family. As to quaternary structure, forms oligomers.

Its subcellular location is the cytoplasm. The protein localises to the nucleoid. In Halothermothrix orenii (strain H 168 / OCM 544 / DSM 9562), this protein is Transcriptional regulator MraZ.